The primary structure comprises 805 residues: Kinesin-like protein KIP3 (805 aa).

A Kinesin motor domain is found at 10–438; that stretch reads SIVVAIRVRP…LKYANRAKEI (429 aa). ATP is bound at residue 192–199; that stretch reads GATGCGKT. The stretch at 449 to 481 forms a coiled coil; the sequence is LSRHVGSYLKMITEQKRQIEELREREEKMISLK. The tract at residues 720 to 805 is disordered; it reads NFSQKKVKWT…HQSLLATARK (86 aa). The span at 764-773 shows a compositional bias: polar residues; that stretch reads MQDTTFNEQG. Over residues 774–783 the composition is skewed to low complexity; sequence PSTPSAPTTA. Residues 792–805 show a composition bias toward polar residues; it reads SLLTHQSLLATARK.

It belongs to the TRAFAC class myosin-kinesin ATPase superfamily. Kinesin family. Kinesin II subfamily.

It localises to the cytoplasm. It is found in the cytoskeleton. The protein is Kinesin-like protein KIP3 (KIP3) of Saccharomyces cerevisiae (strain ATCC 204508 / S288c) (Baker's yeast).